Reading from the N-terminus, the 78-residue chain is U-scoloptoxin(04)-Er1e (78 aa).

A signal peptide spans 1 to 24; sequence MTRHLIFAAMLLVCLFVCWNAVGA. The propeptide occupies 25–28; it reads RDAR.

Belongs to the scoloptoxin-04 family. Contains 2 disulfide bonds. As to expression, expressed by the venom gland.

The protein localises to the secreted. The chain is U-scoloptoxin(04)-Er1e from Ethmostigmus rubripes (Giant centipede).